The chain runs to 124 residues: Small ribosomal subunit protein uS12 (124 aa).

The tract at residues 1–23 (MATINQLVRKPRKRPVAKSDVPA) is disordered. Asp-89 carries the 3-methylthioaspartic acid modification. The segment at 101–124 (ALDTSGVQNRRQGRSKYGTKRPKS) is disordered. The span at 111–124 (RQGRSKYGTKRPKS) shows a compositional bias: basic residues.

This sequence belongs to the universal ribosomal protein uS12 family. Part of the 30S ribosomal subunit. Contacts proteins S8 and S17. May interact with IF1 in the 30S initiation complex.

Its function is as follows. With S4 and S5 plays an important role in translational accuracy. In terms of biological role, interacts with and stabilizes bases of the 16S rRNA that are involved in tRNA selection in the A site and with the mRNA backbone. Located at the interface of the 30S and 50S subunits, it traverses the body of the 30S subunit contacting proteins on the other side and probably holding the rRNA structure together. The combined cluster of proteins S8, S12 and S17 appears to hold together the shoulder and platform of the 30S subunit. This is Small ribosomal subunit protein uS12 from Chromohalobacter salexigens (strain ATCC BAA-138 / DSM 3043 / CIP 106854 / NCIMB 13768 / 1H11).